Here is an 83-residue protein sequence, read N- to C-terminus: Large ribosomal subunit protein eL37 (83 aa).

Residues Cys19, Cys22, Cys34, and Cys37 each coordinate Zn(2+). Residues 19–37 (CRRCGRNSYHVQWERCAAC) form a C4-type zinc finger.

It belongs to the eukaryotic ribosomal protein eL37 family. Zn(2+) serves as cofactor.

Functionally, binds to the 23S rRNA. In Leishmania donovani, this protein is Large ribosomal subunit protein eL37 (RPL37).